Reading from the N-terminus, the 183-residue chain is MASRAGPRAAGTDGSDFQHRERVAMHYQMSVTLKYEIKKLIYVHLVIWLLLVAKMSVGHLRLLSHDQVAMPYQWEYPYLLSVVPSLLGLLSFPRNNISYLVLSMISMGLFSIAPLIYGSMEMFPAAQQLYRHGKAYRFLFGFSAVSVMYLVLVLAVQVHAWQLYYSKKLLDSWFTSTQEKKRK.

Topologically, residues 1–39 (MASRAGPRAAGTDGSDFQHRERVAMHYQMSVTLKYEIKK) are cytoplasmic. Phosphoserine is present on S3. A helical transmembrane segment spans residues 40–60 (LIYVHLVIWLLLVAKMSVGHL). Over 61–71 (RLLSHDQVAMP) the chain is Lumenal. A helical transmembrane segment spans residues 72-92 (YQWEYPYLLSVVPSLLGLLSF). The Cytoplasmic portion of the chain corresponds to 93–96 (PRNN). The chain crosses the membrane as a helical span at residues 97 to 117 (ISYLVLSMISMGLFSIAPLIY). At 118 to 137 (GSMEMFPAAQQLYRHGKAYR) the chain is on the lumenal side. Residues 138–158 (FLFGFSAVSVMYLVLVLAVQV) form a helical membrane-spanning segment. Over 159 to 183 (HAWQLYYSKKLLDSWFTSTQEKKRK) the chain is Cytoplasmic.

It belongs to the jagunal family. In terms of assembly, interacts with COPA, COPB2 and COPG2.

The protein localises to the endoplasmic reticulum membrane. Endoplasmic reticulum transmembrane protein involved in vesicle-mediated transport, which is required for neutrophil function. Required for vesicle-mediated transport; it is however unclear whether it is involved in early secretory pathway or intracellular protein transport. Acts as a regulator of neutrophil function, probably via its role in vesicle-mediated transport: required for defense against fungal pathogens and for granulocyte colony-stimulating factor (GM-CSF) signaling pathway; possibly by regulating glycosylation and/or targeting of proteins contributing to the viability and migration of neutrophils. In Bos taurus (Bovine), this protein is Protein jagunal homolog 1 (JAGN1).